Reading from the N-terminus, the 332-residue chain is Agamous-like MADS-box protein AGL66 (332 aa).

The MADS-box domain occupies 1–61 (MGRVKLEIKR…DRLSLFSGKT (61 aa)). The stretch at 120–151 (TAINSDVEELEHEVYKLQQQLLMAEEELRKYE) forms a coiled coil.

In terms of assembly, forms a heterodimer with AGL30. In terms of tissue distribution, expressed in pollen.

The protein localises to the nucleus. In terms of biological role, probable transcription factor that forms a heterodimer with the MADS-box protein AGL30 and is involved in the regulation of pollen maturation at the late stages of pollen development and pollen tube growth. This chain is Agamous-like MADS-box protein AGL66, found in Arabidopsis thaliana (Mouse-ear cress).